The following is a 268-amino-acid chain: Hydroxyacylglutathione hydrolase (268 aa).

Zn(2+)-binding residues include His56, His58, Asp60, His61, His113, Asp130, and His168.

The protein belongs to the metallo-beta-lactamase superfamily. Glyoxalase II family. As to quaternary structure, monomer. It depends on Zn(2+) as a cofactor.

The enzyme catalyses an S-(2-hydroxyacyl)glutathione + H2O = a 2-hydroxy carboxylate + glutathione + H(+). It participates in secondary metabolite metabolism; methylglyoxal degradation; (R)-lactate from methylglyoxal: step 2/2. In terms of biological role, thiolesterase that catalyzes the hydrolysis of S-D-lactoyl-glutathione to form glutathione and D-lactic acid. This is Hydroxyacylglutathione hydrolase from Hydrogenovibrio crunogenus (strain DSM 25203 / XCL-2) (Thiomicrospira crunogena).